We begin with the raw amino-acid sequence, 503 residues long: D-xylose-proton symporter-like 1 (503 aa).

The segment at 1-23 (MGFDPENQSISSVGQVVGDSSSG) is disordered. A compositionally biased stretch (low complexity) spans 8-23 (QSISSVGQVVGDSSSG). Transmembrane regions (helical) follow at residues 51–73 (FLFPALGALLFGYEIGATSCAIM), 95–115 (IITSGSLYGALIGSIVAFSVA), 129–149 (FLYLVGAIVTVVAPVFSILII), 152–172 (VTYGMGIGLTMHAAPMYIAET), 190–210 (VLGMVGGYGIGSLWITVISGW), 213–233 (MYATILPFPVIMGTGMCWLPA), 305–325 (ALTIAGGLVLFQQITGQPSVL), 346–366 (ISILLGLLKLVMTGVSVIVID), 374–394 (LLCGVSGMVISLFLLGSYYMF), 405–425 (ALLLYVGCYQLSFGPIGWLMI), 437–457 (GISLAVLVNFGANALVTFAFS), and 467–487 (ILFCAFGVICVVSLFFIYYIV).

Belongs to the major facilitator superfamily. Sugar transporter (TC 2.A.1.1) family.

It localises to the membrane. The sequence is that of D-xylose-proton symporter-like 1 from Arabidopsis thaliana (Mouse-ear cress).